An 88-amino-acid polypeptide reads, in one-letter code: UPF0297 protein LACR_0137 (88 aa).

The protein belongs to the UPF0297 family.

This is UPF0297 protein LACR_0137 from Lactococcus lactis subsp. cremoris (strain SK11).